The sequence spans 629 residues: Phosphomethylpyrimidine synthase (629 aa).

The interval 1–21 (MSIKAKNAAHLRESAQVDSGS) is disordered. Residues Asn233, Met262, Tyr291, His327, 347-349 (SRG), 388-391 (DGLR), and Glu427 contribute to the substrate site. His431 provides a ligand contact to Zn(2+). Residue Tyr454 participates in substrate binding. His495 lines the Zn(2+) pocket. Residues Cys575, Cys578, and Cys583 each coordinate [4Fe-4S] cluster.

The protein belongs to the ThiC family. In terms of assembly, homodimer. Requires [4Fe-4S] cluster as cofactor.

The enzyme catalyses 5-amino-1-(5-phospho-beta-D-ribosyl)imidazole + S-adenosyl-L-methionine = 4-amino-2-methyl-5-(phosphooxymethyl)pyrimidine + CO + 5'-deoxyadenosine + formate + L-methionine + 3 H(+). The protein operates within cofactor biosynthesis; thiamine diphosphate biosynthesis. Functionally, catalyzes the synthesis of the hydroxymethylpyrimidine phosphate (HMP-P) moiety of thiamine from aminoimidazole ribotide (AIR) in a radical S-adenosyl-L-methionine (SAM)-dependent reaction. The sequence is that of Phosphomethylpyrimidine synthase from Pseudomonas syringae pv. syringae (strain B728a).